The following is a 230-amino-acid chain: Sugar fermentation stimulation protein homolog (230 aa).

It belongs to the SfsA family.

The protein is Sugar fermentation stimulation protein homolog of Pelobacter propionicus (strain DSM 2379 / NBRC 103807 / OttBd1).